Reading from the N-terminus, the 90-residue chain is MNDSVKTSLKRTLVGKVVSNKMDKTVTVLVEHRVKHPIYGKYVVRSKKYHAHDEANTYNEGDLVEIQETRPVSKTKAWAVSRLVEAARVI.

The protein belongs to the universal ribosomal protein uS17 family. As to quaternary structure, part of the 30S ribosomal subunit.

One of the primary rRNA binding proteins, it binds specifically to the 5'-end of 16S ribosomal RNA. This is Small ribosomal subunit protein uS17 from Burkholderia mallei (strain NCTC 10247).